Here is a 205-residue protein sequence, read N- to C-terminus: Delta-aminolevulinic acid dehydratase (205 aa).

Zn(2+) is bound by residues Cys-117, Cys-119, and Cys-127. Lys-192 (schiff-base intermediate with substrate) is an active-site residue. Arg-202 is a substrate binding site.

The protein belongs to the ALAD family. Homooctamer. The cofactor is Zn(2+).

The catalysed reaction is 2 5-aminolevulinate = porphobilinogen + 2 H2O + H(+). Its pathway is porphyrin-containing compound metabolism; protoporphyrin-IX biosynthesis; coproporphyrinogen-III from 5-aminolevulinate: step 1/4. Functionally, catalyzes an early step in the biosynthesis of tetrapyrroles. Binds two molecules of 5-aminolevulinate per subunit, each at a distinct site, and catalyzes their condensation to form porphobilinogen. The protein is Delta-aminolevulinic acid dehydratase (hemB) of Ruminiclostridium josui (Clostridium josui).